The chain runs to 312 residues: tRNA uridine(34) hydroxylase (312 aa).

The Rhodanese domain occupies 123 to 217 (SDPEVLLIDT…YLEEVPQEQS (95 aa)). The active-site Cysteine persulfide intermediate is the Cys-177. Over residues 282 to 293 (ARERQKQIELAR) the composition is skewed to basic and acidic residues. The segment at 282–312 (ARERQKQIELARQRNQPHPLGRDPRQSTLEN) is disordered.

This sequence belongs to the TrhO family.

The catalysed reaction is uridine(34) in tRNA + AH2 + O2 = 5-hydroxyuridine(34) in tRNA + A + H2O. In terms of biological role, catalyzes oxygen-dependent 5-hydroxyuridine (ho5U) modification at position 34 in tRNAs. This chain is tRNA uridine(34) hydroxylase, found in Pseudomonas aeruginosa (strain UCBPP-PA14).